We begin with the raw amino-acid sequence, 97 residues long: Acylphosphatase-2 (97 aa).

N-acetylalanine is present on Ala2. Positions 7–97 constitute an Acylphosphatase-like domain; sequence SVDYEVFGTV…LEYSNFSIRY (91 aa). Residues Arg22 and Asn40 contribute to the active site. Residue Ser91 is modified to Phosphoserine.

This sequence belongs to the acylphosphatase family.

It catalyses the reaction an acyl phosphate + H2O = a carboxylate + phosphate + H(+). In terms of biological role, its physiological role is not yet clear. In Rattus norvegicus (Rat), this protein is Acylphosphatase-2 (Acyp2).